The sequence spans 601 residues: Sulfite reductase [NADPH] flavoprotein alpha-component (601 aa).

Residues isoleucine 65–leucine 203 form the Flavodoxin-like domain. FMN contacts are provided by residues serine 71–alanine 76, serine 118–glycine 121, and leucine 154–cysteine 163. The FAD-binding FR-type domain occupies lysine 236 to proline 450. Residues threonine 324, isoleucine 358, arginine 388 to serine 391, threonine 406 to glycine 408, and glycine 421 to serine 424 each bind FAD. NADP(+) contacts are provided by residues serine 521–glutamine 522, lysine 527–glutamine 531, and aspartate 563. Residue tyrosine 601 coordinates FAD.

It belongs to the NADPH-dependent sulphite reductase flavoprotein subunit CysJ family. The protein in the N-terminal section; belongs to the flavodoxin family. In the C-terminal section; belongs to the flavoprotein pyridine nucleotide cytochrome reductase family. In terms of assembly, alpha(8)-beta(8). The alpha component is a flavoprotein, the beta component is a hemoprotein. FAD is required as a cofactor. FMN serves as cofactor.

It catalyses the reaction hydrogen sulfide + 3 NADP(+) + 3 H2O = sulfite + 3 NADPH + 4 H(+). It participates in sulfur metabolism; hydrogen sulfide biosynthesis; hydrogen sulfide from sulfite (NADPH route): step 1/1. Functionally, component of the sulfite reductase complex that catalyzes the 6-electron reduction of sulfite to sulfide. This is one of several activities required for the biosynthesis of L-cysteine from sulfate. The flavoprotein component catalyzes the electron flow from NADPH -&gt; FAD -&gt; FMN to the hemoprotein component. In Buchnera aphidicola subsp. Acyrthosiphon pisum (strain APS) (Acyrthosiphon pisum symbiotic bacterium), this protein is Sulfite reductase [NADPH] flavoprotein alpha-component.